A 187-amino-acid chain; its full sequence is ATP synthase subunit b, chloroplastic (187 aa).

The chain crosses the membrane as a helical span at residues 34-56; it reads LINLAAVIGLLFYSGRSFLTNLL.

It belongs to the ATPase B chain family. As to quaternary structure, F-type ATPases have 2 components, F(1) - the catalytic core - and F(0) - the membrane proton channel. F(1) has five subunits: alpha(3), beta(3), gamma(1), delta(1), epsilon(1). F(0) has four main subunits: a(1), b(1), b'(1) and c(10-14). The alpha and beta chains form an alternating ring which encloses part of the gamma chain. F(1) is attached to F(0) by a central stalk formed by the gamma and epsilon chains, while a peripheral stalk is formed by the delta, b and b' chains.

It localises to the plastid. The protein localises to the chloroplast thylakoid membrane. F(1)F(0) ATP synthase produces ATP from ADP in the presence of a proton or sodium gradient. F-type ATPases consist of two structural domains, F(1) containing the extramembraneous catalytic core and F(0) containing the membrane proton channel, linked together by a central stalk and a peripheral stalk. During catalysis, ATP synthesis in the catalytic domain of F(1) is coupled via a rotary mechanism of the central stalk subunits to proton translocation. In terms of biological role, component of the F(0) channel, it forms part of the peripheral stalk, linking F(1) to F(0). In Chlorokybus atmophyticus (Soil alga), this protein is ATP synthase subunit b, chloroplastic.